The following is a 69-amino-acid chain: YIELAVVADHGMFTKYNSNIDTIRVHEMVNTVDGFFRSMNVDASIANIEVWSKTITSFGEWRERDIIPR.

Positions 1 to 69 (YIELAVVADH…EWRERDIIPR (69 aa)) constitute a Peptidase M12B domain. Glutamate 3 lines the Ca(2+) pocket.

It belongs to the venom metalloproteinase (M12B) family. P-I subfamily. As to quaternary structure, monomer. Requires Zn(2+) as cofactor. In terms of tissue distribution, expressed by the venom gland.

The protein localises to the secreted. With respect to regulation, inhibited by EDTA. Functionally, this protein is a zinc protease from snake venom that is devoid of significant myotoxic and hemorrhagic activities. It hydrolyzes the Aalpha-chain and more slowly the Bbeta-chain of fibrin and fibrinogen, without affecting the gamma-chains. It induces cell detachment and a apoptosis (anoikis) in endothelial cells. This chain is Snake venom metalloproteinase BnP2, found in Bothrops pauloensis (Neuwied's lancehead).